A 289-amino-acid chain; its full sequence is Toxin tox21A (289 aa).

The first 14 residues, methionine 1 to alanine 14, serve as a signal peptide directing secretion. Positions alanine 15–isoleucine 27 are excised as a propeptide. The interval aspartate 270 to cysteine 289 is disordered.

In terms of processing, contains several disulfide bonds. In terms of tissue distribution, posterior glands which appear to be connected with the stylet through a series of ducts.

The protein localises to the secreted. In terms of biological role, has contracting-paralyzing activity in insect larvae. This is Toxin tox21A from Pyemotes tritici (Straw itch mite).